The chain runs to 196 residues: tRNA (pseudouridine(54)-N(1))-methyltransferase (196 aa).

Residue Leu126 participates in S-adenosyl-L-methionine binding.

The protein belongs to the methyltransferase superfamily. TrmY family. As to quaternary structure, homodimer.

It localises to the cytoplasm. The catalysed reaction is pseudouridine(54) in tRNA + S-adenosyl-L-methionine = N(1)-methylpseudouridine(54) in tRNA + S-adenosyl-L-homocysteine + H(+). In terms of biological role, specifically catalyzes the N1-methylation of pseudouridine at position 54 (Psi54) in tRNAs. This is tRNA (pseudouridine(54)-N(1))-methyltransferase from Halobacterium salinarum (strain ATCC 700922 / JCM 11081 / NRC-1) (Halobacterium halobium).